Reading from the N-terminus, the 380-residue chain is 3-dehydroquinate synthase (380 aa).

The protein belongs to the archaeal-type DHQ synthase family.

The enzyme catalyses 2-amino-2,3,7-trideoxy-D-lyxo-hept-6-ulosonate + NAD(+) + H2O = 3-dehydroquinate + NH4(+) + NADH + H(+). Its function is as follows. Catalyzes the oxidative deamination and cyclization of 2-amino-3,7-dideoxy-D-threo-hept-6-ulosonic acid (ADH) to yield 3-dehydroquinate (DHQ), which is fed into the canonical shikimic pathway of aromatic amino acid biosynthesis. This is 3-dehydroquinate synthase from Methanosarcina barkeri (strain Fusaro / DSM 804).